Here is a 542-residue protein sequence, read N- to C-terminus: Excitatory amino acid transporter 1 (542 aa).

Over 1–47 the chain is Cytoplasmic; that stretch reads MTKSNGEEPKMGGRMERFQQGVRKRTLLAKKKVQNITKEDVKSYLFR. The helical transmembrane segment at 48–68 threads the bilayer; that stretch reads NAFVLLTVTAVIVGTILGFTL. At 69 to 86 the chain is on the extracellular side; it reads RPYRMSYREVKYFSFPGE. Residues 87-108 traverse the membrane as a helical segment; that stretch reads LLMRMLQMLVLPLIISSLVTGM. The Cytoplasmic portion of the chain corresponds to 109–122; that stretch reads AALDSKASGKMGMR. Residues 123 to 145 form a helical membrane-spanning segment; the sequence is AVVYYMTTTIIAVVIGIIIVIII. The Extracellular portion of the chain corresponds to 146-236; that stretch reads HPGKGTKENM…ITEELVPVPG (91 aa). The helical transmembrane segment at 237-260 threads the bilayer; it reads SVNGVNALGLVVFSMCFGFVIGNM. Topologically, residues 261 to 269 are cytoplasmic; it reads KEQGQALRE. A helical transmembrane segment spans residues 270-297; that stretch reads FFDSLNEAIMRLVAVIMWYAPVGILFLI. Topologically, residues 298–318 are extracellular; that stretch reads AGKIVEMEDMGVIGGQLAMYT. A helical membrane pass occupies residues 319-340; the sequence is VTVIVGLLIHAVIVLPLLYFLV. Residues 341–345 lie on the Cytoplasmic side of the membrane; sequence TRKNP. An intramembrane region (discontinuously helical) is located at residues 346 to 376; the sequence is WVFIGGLLQALITALGTSSSSATLPITFKCL. Residue 363 to 365 participates in L-aspartate binding; sequence SSS. The Cytoplasmic segment spans residues 377–385; sequence EENNGVDKR. A helical transmembrane segment spans residues 386-412; the sequence is VTRFVLPVGATINMDGTALYEALAAIF. The Na(+) site is built by G394, T396, and N398. T402 contacts L-aspartate. The Extracellular segment spans residues 413–425; sequence IAQVNNFELNFGQ. An intramembrane region (discontinuously helical) is located at residues 426–459; the sequence is IITISITATAASIGAAGIPQAGLVTMVIVLTSVG. Position 443–447 (443–447) interacts with L-aspartate; the sequence is IPQAG. Topologically, residues 460 to 472 are extracellular; sequence LPTDDITLIIAVD. A helical membrane pass occupies residues 473–494; sequence WFLDRLRTTTNVLGDSLGAGIV. D476 and N483 together coordinate L-aspartate. Positions 483 and 487 each coordinate Na(+). Residues 495 to 542 are Cytoplasmic-facing; the sequence is EHLSRHELKNRDVEMGNSVIEENEMKKPYQLIAQDNETEKPIDSETKM. S512 carries the post-translational modification Phosphoserine.

This sequence belongs to the dicarboxylate/amino acid:cation symporter (DAACS) (TC 2.A.23) family. SLC1A3 subfamily. As to quaternary structure, homotrimer. In terms of processing, glycosylated. As to expression, detected in brain. Detected at very much lower levels in heart, lung, placenta and skeletal muscle. Highly expressed in cerebellum, but also found in frontal cortex, hippocampus and basal ganglia.

Its subcellular location is the cell membrane. The enzyme catalyses K(+)(in) + L-glutamate(out) + 3 Na(+)(out) + H(+)(out) = K(+)(out) + L-glutamate(in) + 3 Na(+)(in) + H(+)(in). It carries out the reaction K(+)(in) + L-aspartate(out) + 3 Na(+)(out) + H(+)(out) = K(+)(out) + L-aspartate(in) + 3 Na(+)(in) + H(+)(in). It catalyses the reaction D-aspartate(out) + K(+)(in) + 3 Na(+)(out) + H(+)(out) = D-aspartate(in) + K(+)(out) + 3 Na(+)(in) + H(+)(in). Functionally, sodium-dependent, high-affinity amino acid transporter that mediates the uptake of L-glutamate and also L-aspartate and D-aspartate. Functions as a symporter that transports one amino acid molecule together with two or three Na(+) ions and one proton, in parallel with the counter-transport of one K(+) ion. Mediates Cl(-) flux that is not coupled to amino acid transport; this avoids the accumulation of negative charges due to aspartate and Na(+) symport. Plays a redundant role in the rapid removal of released glutamate from the synaptic cleft, which is essential for terminating the postsynaptic action of glutamate. This Homo sapiens (Human) protein is Excitatory amino acid transporter 1.